A 1470-amino-acid polypeptide reads, in one-letter code: Roundabout homolog 2 (1470 aa).

The N-terminal stretch at 1-21 (MNPLMFTLLLLFGFLCIQIDG) is a signal peptide. The Extracellular segment spans residues 22–863 (SRLRQEDFPP…EQITDVVKQP (842 aa)). 5 consecutive Ig-like C2-type domains span residues 31–127 (PRIV…ASLE), 133–220 (DDFR…AELT), 225–309 (PTFL…ATLT), 318–413 (PQFV…LEVT), and 422–508 (PIIL…AVLD). An intrachain disulfide couples C52 to C110. N123 carries an N-linked (GlcNAc...) asparagine glycan. Cystine bridges form between C154-C203, C246-C293, and C339-C395. A glycan (N-linked (GlcNAc...) asparagine) is linked at N430. Cysteines 443 and 492 form a disulfide. Fibronectin type-III domains are found at residues 528-622 (PPSK…TQDI), 641-739 (VVVR…TEEA), and 743-840 (PPQS…IGGR). N-linked (GlcNAc...) asparagine glycosylation is found at N756, N786, N793, and N849. A helical membrane pass occupies residues 864–884 (AFIAGIGGACWVILMGFSIWL). Residues 885-1470 (YWRRKKRKGL…GSNSQGQFTE (586 aa)) are Cytoplasmic-facing. Disordered stretches follow at residues 1036–1089 (GFGY…LPGT), 1129–1159 (EDRV…LTPS), 1190–1371 (IQSN…DCPA), and 1383–1470 (DWIN…QFTE). A compositionally biased stretch (polar residues) spans 1144 to 1158 (PAISFGQQSTATLTP). A Phosphothreonine modification is found at T1157. S1159 is subject to Phosphoserine. Positions 1194-1203 (TPPPQPPAPP) are enriched in pro residues. Over residues 1215-1231 (LETDVPDEDADDEEEPL) the composition is skewed to acidic residues. Residues 1243–1288 (TPGSSMDNLDSSVTGKAFSSSQRQRPTSPFSTDSNTSAAQNQSQRP) show a composition bias toward polar residues. Positions 1315 to 1325 (DLPPPPDPPPG) are enriched in pro residues. Residues 1328–1343 (LRQQIGLSQHSGNVEN) are compositionally biased toward polar residues. The span at 1413-1437 (SKPSFPSPGGHSSSGTSSSKGSTGP) shows a compositional bias: low complexity. Residues 1461-1470 (GSNSQGQFTE) are compositionally biased toward polar residues.

The protein belongs to the immunoglobulin superfamily. ROBO family. In terms of assembly, interacts with SLIT2. Expressed in embryonal spinal cord.

It is found in the membrane. Receptor for SLIT2, and probably SLIT1, which are thought to act as molecular guidance cue in cellular migration, including axonal navigation at the ventral midline of the neural tube and projection of axons to different regions during neuronal development. The polypeptide is Roundabout homolog 2 (Robo2) (Mus musculus (Mouse)).